The chain runs to 262 residues: Tetratricopeptide repeat protein 33 (262 aa).

TPR repeat units follow at residues 59 to 92 (SKQL…TPND), 93 to 126 (ATLY…NPHS), and 127 to 160 (WESW…YPMN). Residue S197 is modified to Phosphoserine. Residue T251 is modified to Phosphothreonine.

The sequence is that of Tetratricopeptide repeat protein 33 (TTC33) from Homo sapiens (Human).